Reading from the N-terminus, the 342-residue chain is Ribosomal RNA small subunit methyltransferase C (342 aa).

The protein belongs to the methyltransferase superfamily. RsmC family. In terms of assembly, monomer.

It localises to the cytoplasm. It catalyses the reaction guanosine(1207) in 16S rRNA + S-adenosyl-L-methionine = N(2)-methylguanosine(1207) in 16S rRNA + S-adenosyl-L-homocysteine + H(+). Specifically methylates the guanine in position 1207 of 16S rRNA in the 30S particle. The protein is Ribosomal RNA small subunit methyltransferase C of Shewanella oneidensis (strain ATCC 700550 / JCM 31522 / CIP 106686 / LMG 19005 / NCIMB 14063 / MR-1).